A 360-amino-acid chain; its full sequence is MKTWVIKIGTSILRGTEETSTEEVIETLCRSFTSFLLKGNKLILVTSGAVGLGCQKLNIKTRPNDLSTLQATAAVGQVNLMSLYDKIFNKLGHNIAQILITKADFNSRESFNNASKTLKKLIDLNVIPIVNENDTVANEELKYGDNDTLSALVALAINANKLILLTDIENLYSKDPRKNKDAHPIKEVHNSELKEIKNKNNQNSNNEWGTGGISTKLISAEIATKGGVEVQLVDGTNKKNLIEIFNDNKIGTLFYPLEKPIGNKKSWLSHAIHTVGKITLDDGAFFAINKKGASLLAVGVKNVEGNFTVNQAVKIVNTDNKEVAKGLVSISSDNLRSILNNKDNNNSSIIVVHRDVLALS.

ATP is bound at residue Lys-7. Residues Ser-47, Asp-134, and Asn-146 each coordinate substrate. ATP-binding positions include 166–167 and 210–216; these read TD and TGGISTK. Positions 275–356 constitute a PUA domain; that stretch reads VGKITLDDGA…SSIIVVHRDV (82 aa).

Belongs to the glutamate 5-kinase family.

Its subcellular location is the cytoplasm. The catalysed reaction is L-glutamate + ATP = L-glutamyl 5-phosphate + ADP. It functions in the pathway amino-acid biosynthesis; L-proline biosynthesis; L-glutamate 5-semialdehyde from L-glutamate: step 1/2. In terms of biological role, catalyzes the transfer of a phosphate group to glutamate to form L-glutamate 5-phosphate. The protein is Glutamate 5-kinase of Prochlorococcus marinus (strain MIT 9312).